A 456-amino-acid polypeptide reads, in one-letter code: 3-isopropylmalate dehydratase large subunit (456 aa).

Positions 336, 396, and 399 each coordinate [4Fe-4S] cluster.

This sequence belongs to the aconitase/IPM isomerase family. LeuC type 1 subfamily. In terms of assembly, heterodimer of LeuC and LeuD. [4Fe-4S] cluster serves as cofactor.

It catalyses the reaction (2R,3S)-3-isopropylmalate = (2S)-2-isopropylmalate. It participates in amino-acid biosynthesis; L-leucine biosynthesis; L-leucine from 3-methyl-2-oxobutanoate: step 2/4. In terms of biological role, catalyzes the isomerization between 2-isopropylmalate and 3-isopropylmalate, via the formation of 2-isopropylmaleate. This chain is 3-isopropylmalate dehydratase large subunit, found in Staphylococcus haemolyticus (strain JCSC1435).